Here is a 212-residue protein sequence, read N- to C-terminus: Protein G1-like7 (212 aa).

Residues 1–22 (MDPSGPGPSSAAAGGAPAVAAA) show a composition bias toward low complexity. 2 disordered regions span residues 1 to 34 (MDPS…RYES) and 148 to 212 (KARG…PSAS). The 128-residue stretch at 31–158 (RYESQKRRDW…ARGIPYEKKK (128 aa)) folds into the ALOG domain. Residues 156 to 160 (KKKRK) carry the Nuclear localization signal motif. Positions 173–182 (SGSSSAAAAA) are enriched in low complexity. The segment covering 183-194 (AGGGDTGSGGGA) has biased composition (gly residues).

Belongs to the plant homeotic and developmental regulators ALOG protein family.

The protein resides in the nucleus. In terms of biological role, probable transcription regulator that acts as a developmental regulator by promoting cell growth in response to light. This Oryza sativa subsp. indica (Rice) protein is Protein G1-like7.